Consider the following 481-residue polypeptide: RuvB-like helicase 2 (481 aa).

76-83 (GPPSTGKT) provides a ligand contact to ATP.

Belongs to the RuvB family. In terms of assembly, may form heterododecamers with hel-1/rvb1. Component of the SWR1 chromatin remodeling complex, the INO80 chromatin remodeling complex, and of the R2TP complex.

Its subcellular location is the nucleus. It catalyses the reaction ATP + H2O = ADP + phosphate + H(+). Its function is as follows. DNA helicase which participates in several chromatin remodeling complexes, including the SWR1 and the INO80 complexes. The SWR1 complex mediates the ATP-dependent exchange of histone H2A for the H2A variant H2A.Z leading to transcriptional regulation of selected genes by chromatin remodeling. The INO80 complex remodels chromatin by shifting nucleosomes and is involved in DNA repair. Also involved in pre-rRNA processing. The chain is RuvB-like helicase 2 (hel-2) from Neurospora crassa (strain ATCC 24698 / 74-OR23-1A / CBS 708.71 / DSM 1257 / FGSC 987).